Consider the following 351-residue polypeptide: Muscleblind-like protein 2a (351 aa).

4 consecutive C3H1-type zinc fingers follow at residues 13 to 41 (WLTL…HPPK), 47 to 73 (NGRV…HPPA), 177 to 205 (TDKL…HPSD), and 213 to 239 (DNTV…HPPA).

This sequence belongs to the muscleblind family. In terms of tissue distribution, expressed in fast and slow myotomal muscle, heart, liver, skin, brain and testis.

It is found in the nucleus. The protein resides in the cytoplasm. Functionally, involved in pre-mRNA alternative splicing regulation. RNA-binding protein that binds to 5'ACACCC-3' core sequence. This is Muscleblind-like protein 2a (mbnl2a) from Takifugu rubripes (Japanese pufferfish).